Reading from the N-terminus, the 118-residue chain is MLYILNSATLPLKPGKEYVIHAKELTIEEAKELLENERFISAVGHEATAKMLTNIFDVEIPMNRIQIFLDDGDKLLSIILKTRLEEGKVIKTVEELEQIGYNIWLFEVVTYEHNVKYE.

This is an uncharacterized protein from Sulfolobus islandicus filamentous virus (isolate Iceland/Hveragerdi) (SIFV).